A 262-amino-acid polypeptide reads, in one-letter code: MANKVKIGILNLMHDKLDTQSHFIKVLPNADLTFFYPRMHYQNRPIPPEVNMTSEPLDINRVSEFDGFIITGAPIDQIDFSKITYIEEIRYLLQALDNHKIQQLYFCWGAMAALNYFYGIKKKILAEKIFGVFPHLITEPHPLLSGLSQGFMAPHARYAEMDKKQIMQDERLAINAVDDNSHLFMVSAKDNPERNFIFSHIEYGKDSLRDEYNREINAHPERHYKKPINYSMSNPSFQWQDTQKIFFNNWLKKVKDNKLVLN.

Cys-107 (acyl-thioester intermediate) is an active-site residue. Position 128 (Lys-128) interacts with substrate. Catalysis depends on His-200, which acts as the Proton acceptor. Glu-202 is an active-site residue. Residue Arg-214 coordinates substrate.

The protein belongs to the MetA family.

The protein resides in the cytoplasm. The catalysed reaction is L-serine + acetyl-CoA = O-acetyl-L-serine + CoA. It carries out the reaction L-homoserine + acetyl-CoA = O-acetyl-L-homoserine + CoA. Its pathway is amino-acid biosynthesis; L-cysteine biosynthesis; L-cysteine from L-serine: step 1/2. Functionally, transfers an acetyl group from acetyl-CoA to L-serine, forming acetyl-L-serine. In vitro, also has homoserine acetyl transferase activity. This chain is Serine O-acetyltransferase, found in Lactobacillus acidophilus.